The primary structure comprises 168 residues: uncharacterized protein (168 aa).

The protein resides in the mitochondrion. This is an uncharacterized protein from Marchantia polymorpha (Common liverwort).